The primary structure comprises 263 residues: Troponin T, slow skeletal muscle (263 aa).

The span at 1-38 shows a compositional bias: acidic residues; the sequence is MSDAEEQEYEEEQPEEEEAAEEEEEAPEEPEPAAEPEE. Disordered regions lie at residues 1–64 and 109–154; these read MSDA…RVDF and AERA…KKKV. A Phosphoserine; by CK2 modification is found at S2. A compositionally biased stretch (pro residues) spans 44-56; the sequence is SRPVVPPLIPPKI. Positions 109–150 are enriched in basic and acidic residues; the sequence is AERAEQQRFRTEKERERQAKLAEEKMRKEEEEAKKRAEDDAK.

The protein belongs to the troponin T family. Interacts with TPM3. Expressed dominantly in slow muscles, like masseter, diaphragm, psoas major and spinnalis. Isoform 2 is also expressed in fast muscles.

In terms of biological role, troponin T is the tropomyosin-binding subunit of troponin, the thin filament regulatory complex which confers calcium-sensitivity to striated muscle actomyosin ATPase activity. This Bos taurus (Bovine) protein is Troponin T, slow skeletal muscle (TNNT1).